Reading from the N-terminus, the 430-residue chain is Enolase (430 aa).

Q163 is a (2R)-2-phosphoglycerate binding site. Catalysis depends on E205, which acts as the Proton donor. The Mg(2+) site is built by D242, E287, and D314. (2R)-2-phosphoglycerate-binding residues include K339, R368, S369, and K390. K339 (proton acceptor) is an active-site residue.

Belongs to the enolase family. The cofactor is Mg(2+).

The protein resides in the cytoplasm. The protein localises to the secreted. It is found in the cell surface. The enzyme catalyses (2R)-2-phosphoglycerate = phosphoenolpyruvate + H2O. Its pathway is carbohydrate degradation; glycolysis; pyruvate from D-glyceraldehyde 3-phosphate: step 4/5. Functionally, catalyzes the reversible conversion of 2-phosphoglycerate (2-PG) into phosphoenolpyruvate (PEP). It is essential for the degradation of carbohydrates via glycolysis. This Bacillus licheniformis (strain ATCC 14580 / DSM 13 / JCM 2505 / CCUG 7422 / NBRC 12200 / NCIMB 9375 / NCTC 10341 / NRRL NRS-1264 / Gibson 46) protein is Enolase.